The chain runs to 464 residues: RYamide receptor (464 aa).

Topologically, residues 1 to 105 are extracellular; sequence MEHHNSHLLP…EDMWSSAYFK (105 aa). 3 N-linked (GlcNAc...) asparagine glycosylation sites follow: N49, N79, and N85. A helical transmembrane segment spans residues 106 to 126; that stretch reads IIVYMLYIPIFIFALIGNGTV. Residues 127 to 148 lie on the Cytoplasmic side of the membrane; the sequence is CYIVYSTPRMRTVTNYFIASLA. The helical transmembrane segment at 149–169 threads the bilayer; it reads IGDILMSFFCVPSSFISLFIL. The Extracellular portion of the chain corresponds to 170-189; it reads NYWPFGLALCHFVNYSQAVS. N183 carries an N-linked (GlcNAc...) asparagine glycan. A helical membrane pass occupies residues 190–210; it reads VLVSAYTLVAISIDRYIAIMW. The Cytoplasmic portion of the chain corresponds to 211–221; the sequence is PLKPRITKRYA. Residues 222 to 242 form a helical membrane-spanning segment; that stretch reads TFIIAGVWFIALATALPIPIV. The Extracellular segment spans residues 243-274; that stretch reads SGLDIPMSPWHTKCEKYICREMWPSRTQEYYY. The chain crosses the membrane as a helical span at residues 275–295; it reads TLSLFALQFVVPLGVLIFTYA. At 296 to 329 the chain is on the cytoplasmic side; that stretch reads RITIRVWAKRPPGEAETNRDQRMARSKRKMVKMM. Residues 330 to 350 traverse the membrane as a helical segment; it reads LTVVIVFTCCWLPFNILQLLL. The Extracellular segment spans residues 351 to 363; that stretch reads NDEEFAHWDPLPY. A helical transmembrane segment spans residues 364–384; sequence VWFAFHWLAMSHCCYNPIIYC. Topologically, residues 385 to 464 are cytoplasmic; the sequence is YMNARFRSGF…LSCGETSPLR (80 aa).

The protein belongs to the G-protein coupled receptor 1 family.

Its subcellular location is the cell membrane. Functionally, receptor for the neuropeptides RYamide-1 and RYamide-2. The activity of this receptor is mediated by G proteins which activate a phosphatidyl-inositol-calcium second messenger system. RYamide signaling may suppress feeding behavior. The protein is RYamide receptor of Drosophila melanogaster (Fruit fly).